The sequence spans 869 residues: Bifunctional uridylyltransferase/uridylyl-removing enzyme (869 aa).

The uridylyltransferase stretch occupies residues 1–331 (MPTNLPALPM…FPSESQVTRV (331 aa)). Residues 332–688 (INERFVERQG…ARISPAGEGL (357 aa)) are uridylyl-removing. The 123-residue stretch at 450–572 (VDQHILMVVR…VGDERHLTAL (123 aa)) folds into the HD domain. ACT domains follow at residues 689–773 (QVAV…PSQG) and 800–869 (LLSL…ALEI).

The protein belongs to the GlnD family. Mg(2+) serves as cofactor.

It catalyses the reaction [protein-PII]-L-tyrosine + UTP = [protein-PII]-uridylyl-L-tyrosine + diphosphate. It carries out the reaction [protein-PII]-uridylyl-L-tyrosine + H2O = [protein-PII]-L-tyrosine + UMP + H(+). Its activity is regulated as follows. Uridylyltransferase (UTase) activity is inhibited by glutamine, while glutamine activates uridylyl-removing (UR) activity. Its function is as follows. Modifies, by uridylylation and deuridylylation, the PII regulatory proteins (GlnB and homologs), in response to the nitrogen status of the cell that GlnD senses through the glutamine level. Under low glutamine levels, catalyzes the conversion of the PII proteins and UTP to PII-UMP and PPi, while under higher glutamine levels, GlnD hydrolyzes PII-UMP to PII and UMP (deuridylylation). Thus, controls uridylylation state and activity of the PII proteins, and plays an important role in the regulation of nitrogen assimilation and metabolism. This Cupriavidus pinatubonensis (strain JMP 134 / LMG 1197) (Cupriavidus necator (strain JMP 134)) protein is Bifunctional uridylyltransferase/uridylyl-removing enzyme.